A 194-amino-acid chain; its full sequence is NADH-quinone oxidoreductase subunit B (194 aa).

Cys73, Cys74, Cys138, and Cys168 together coordinate [4Fe-4S] cluster.

Belongs to the complex I 20 kDa subunit family. In terms of assembly, NDH-1 is composed of 14 different subunits. Subunits NuoB, C, D, E, F, and G constitute the peripheral sector of the complex. [4Fe-4S] cluster is required as a cofactor.

It is found in the cell inner membrane. The catalysed reaction is a quinone + NADH + 5 H(+)(in) = a quinol + NAD(+) + 4 H(+)(out). Its function is as follows. NDH-1 shuttles electrons from NADH, via FMN and iron-sulfur (Fe-S) centers, to quinones in the respiratory chain. The immediate electron acceptor for the enzyme in this species is believed to be ubiquinone. Couples the redox reaction to proton translocation (for every two electrons transferred, four hydrogen ions are translocated across the cytoplasmic membrane), and thus conserves the redox energy in a proton gradient. The sequence is that of NADH-quinone oxidoreductase subunit B from Bradyrhizobium sp. (strain BTAi1 / ATCC BAA-1182).